A 230-amino-acid polypeptide reads, in one-letter code: Large ribosomal subunit protein uL1 (230 aa).

Belongs to the universal ribosomal protein uL1 family. In terms of assembly, part of the 50S ribosomal subunit.

Functionally, binds directly to 23S rRNA. The L1 stalk is quite mobile in the ribosome, and is involved in E site tRNA release. In terms of biological role, protein L1 is also a translational repressor protein, it controls the translation of the L11 operon by binding to its mRNA. The polypeptide is Large ribosomal subunit protein uL1 (Bradyrhizobium sp. (strain ORS 278)).